Consider the following 503-residue polypeptide: WD repeat-containing protein 55 homolog (503 aa).

Positions Met1–Leu131 are disordered. Acidic residues-rich tracts occupy residues Asp12–Met23 and Val37–Ala56. Polar residues predominate over residues Pro59–Asp76. The span at Asn78–Glu96 shows a compositional bias: acidic residues. 6 WD repeats span residues Lys157–Leu196, Val201–Glu242, Ala244–Glu282, Glu285–Gln324, Pro327–Asp366, and Gln411–Asp450. Positions Thr483–Ala503 are disordered.

The protein belongs to the WD repeat WDR55 family.

This Drosophila pseudoobscura pseudoobscura (Fruit fly) protein is WD repeat-containing protein 55 homolog.